Here is a 491-residue protein sequence, read N- to C-terminus: Glutamate--tRNA ligase (491 aa).

Residues 13–23 (PSPTGFLHIGN) carry the 'HIGH' region motif. Residues Cys-110, Cys-112, Cys-137, and His-139 each contribute to the Zn(2+) site. The short motif at 254-258 (KLSKR) is the 'KMSKS' region element. ATP is bound at residue Lys-257.

This sequence belongs to the class-I aminoacyl-tRNA synthetase family. Glutamate--tRNA ligase type 1 subfamily. In terms of assembly, monomer. Zn(2+) is required as a cofactor.

The protein localises to the cytoplasm. The enzyme catalyses tRNA(Glu) + L-glutamate + ATP = L-glutamyl-tRNA(Glu) + AMP + diphosphate. Catalyzes the attachment of glutamate to tRNA(Glu) in a two-step reaction: glutamate is first activated by ATP to form Glu-AMP and then transferred to the acceptor end of tRNA(Glu). The protein is Glutamate--tRNA ligase of Listeria monocytogenes serotype 4b (strain F2365).